The primary structure comprises 192 residues: Akirin-1 (192 aa).

The segment at 17-71 (LLSPGSPKRRRCAPLPGPTPGLRPPDAEPPPPFQTQTPPQSLQQPAPPGSERRLP) is disordered. Ser22 carries the phosphoserine modification. The short motif at 23-28 (PKRRRC) is the Nuclear localization signal element. Residues 31-49 (LPGPTPGLRPPDAEPPPPF) show a composition bias toward pro residues. The segment covering 50 to 60 (QTQTPPQSLQQ) has biased composition (low complexity). Thr72 is modified (phosphothreonine). Over residues 104–122 (ASESQPHSSALTAPSSPGS) the composition is skewed to polar residues. Positions 104–127 (ASESQPHSSALTAPSSPGSSWMKK) are disordered. An SYVS motif motif is present at residues 189-192 (SYVS).

The protein belongs to the akirin family. As to expression, widely expressed with the highest expression in heart, liver, placenta and peripheral blood leukocytes.

It localises to the nucleus. In terms of biological role, molecular adapter that acts as a bridge between proteins, and which is involved skeletal muscle development. Functions as a signal transducer for MSTN during skeletal muscle regeneration and myogenesis. May regulate chemotaxis of both macrophages and myoblasts by reorganising actin cytoskeleton, leading to more efficient lamellipodia formation via a PI3 kinase dependent pathway. In contrast to AKIRIN2, not involved in nuclear import of proteasomes. This chain is Akirin-1, found in Homo sapiens (Human).